The sequence spans 337 residues: Biotin synthase (337 aa).

The Radical SAM core domain occupies 58-288 (AGSELLHACS…AHPHKIIKFA (231 aa)). [4Fe-4S] cluster-binding residues include Cys-76, Cys-80, and Cys-83. [2Fe-2S] cluster contacts are provided by Cys-155, Cys-216, and Lys-286.

Belongs to the radical SAM superfamily. Biotin synthase family. In terms of assembly, homodimer. [4Fe-4S] cluster serves as cofactor. It depends on [2Fe-2S] cluster as a cofactor.

It carries out the reaction (4R,5S)-dethiobiotin + (sulfur carrier)-SH + 2 reduced [2Fe-2S]-[ferredoxin] + 2 S-adenosyl-L-methionine = (sulfur carrier)-H + biotin + 2 5'-deoxyadenosine + 2 L-methionine + 2 oxidized [2Fe-2S]-[ferredoxin]. It participates in cofactor biosynthesis; biotin biosynthesis; biotin from 7,8-diaminononanoate: step 2/2. Its function is as follows. Catalyzes the conversion of dethiobiotin (DTB) to biotin by the insertion of a sulfur atom into dethiobiotin via a radical-based mechanism. This Pelodictyon phaeoclathratiforme (strain DSM 5477 / BU-1) protein is Biotin synthase.